Here is a 341-residue protein sequence, read N- to C-terminus: Transcription factor JunD (341 aa).

The disordered stretch occupies residues 21 to 49 (VAGAAGAPGGGGFAPPGRAFPGAPPTSSM). Residues 35–47 (PPGRAFPGAPPTS) carry the Menin-binding motif (MBM) motif. An MAP kinase docking motif; essential for its phosphorylation motif is present at residues 51-60 (KKDALTLSLA). A disordered region spans residues 65 to 85 (AGLKPGSATAPSALRPDGAPD). Position 90 is a phosphoserine (S90). Phosphoserine; by MAPK8 is present on S100. T117 carries the post-translational modification Phosphothreonine. The tract at residues 155-176 (AATAATSGAPAPPAPADLAATP) is disordered. Phosphoserine is present on residues S245, S249, and S253. Residues 262–289 (RIKAERKRLRNRIAASKCRKRKLERISR) are basic motif. A bZIP domain is found at 262–325 (RIKAERKRLR…AQLKQKVLSH (64 aa)). A leucine-zipper region spans residues 290–318 (LEEKVKTLKSQNTELASTASLLREQVAQL).

Belongs to the bZIP family. Jun subfamily. As to quaternary structure, heterodimer; binds DNA as a heterodimer. Component of an AP-1 transcription factor complex composed of JUN-FOS heterodimers. As part of the AP-1 transcription factor complex, forms heterodimers with FOS proteins, thereby binding to the AP-1 consensus sequence and stimulating transcription. Forms heterodimers with FOSB; thereby binding to the AP-1 consensus sequence. Interacts (via MBM motif) with MEN1; this interaction represses transcriptional activation. Interacts with MAPK10; this interaction is inhibited in the presence of MEN1. Post-translationally, phosphorylated by MAP kinases MAPK8 and MAPK10; phosphorylation is inhibited in the presence of MEN1.

The protein resides in the nucleus. Functionally, transcription factor binding AP-1 sites. Heterodimerizes with proteins of the FOS family to form an AP-1 transcription factor complex, thereby enhancing their DNA binding activity to an AP-1 consensus sequence 3'-TGA[GC]TCA-5' and enhancing their transcriptional activity. In Rattus norvegicus (Rat), this protein is Transcription factor JunD (Jund).